A 361-amino-acid polypeptide reads, in one-letter code: Adenosine kinase (361 aa).

The short motif at 7–15 (PKPKKLKVE) is the Nuclear localization signal element. Adenosine is bound at residue D34. Mg(2+) is bound at residue S48. Phosphotyrosine is present on Y76. N147 is a binding site for Mg(2+). Q305 serves as a coordination point for adenosine. D316 is an active-site residue. D316 functions as the Proton acceptor in the catalytic mechanism.

This sequence belongs to the carbohydrate kinase PfkB family. In terms of assembly, monomer. Mg(2+) is required as a cofactor.

The protein localises to the nucleus. The catalysed reaction is adenosine + ATP = AMP + ADP + H(+). The protein operates within purine metabolism; AMP biosynthesis via salvage pathway; AMP from adenosine: step 1/1. Functionally, catalyzes the phosphorylation of the purine nucleoside adenosine at the 5' position in an ATP-dependent manner. Serves as a potential regulator of concentrations of extracellular adenosine and intracellular adenine nucleotides. The chain is Adenosine kinase (Adk) from Rattus norvegicus (Rat).